A 368-amino-acid chain; its full sequence is 4-hydroxy-3-methylbut-2-en-1-yl diphosphate synthase (flavodoxin) (368 aa).

Residues Cys-268, Cys-271, Cys-303, and Glu-310 each coordinate [4Fe-4S] cluster.

It belongs to the IspG family. The cofactor is [4Fe-4S] cluster.

It carries out the reaction (2E)-4-hydroxy-3-methylbut-2-enyl diphosphate + oxidized [flavodoxin] + H2O + 2 H(+) = 2-C-methyl-D-erythritol 2,4-cyclic diphosphate + reduced [flavodoxin]. Its pathway is isoprenoid biosynthesis; isopentenyl diphosphate biosynthesis via DXP pathway; isopentenyl diphosphate from 1-deoxy-D-xylulose 5-phosphate: step 5/6. In terms of biological role, converts 2C-methyl-D-erythritol 2,4-cyclodiphosphate (ME-2,4cPP) into 1-hydroxy-2-methyl-2-(E)-butenyl 4-diphosphate. The chain is 4-hydroxy-3-methylbut-2-en-1-yl diphosphate synthase (flavodoxin) from Listeria monocytogenes serotype 4b (strain CLIP80459).